Here is a 264-residue protein sequence, read N- to C-terminus: Small ribosomal subunit protein uS3 (264 aa).

Residues 39–107 (VREFLKKKLK…PVHVNIEEIR (69 aa)) form the KH type-2 domain. Residues 211–264 (NDAPVVEEPQEERRKRPGRPEGRRREGEGRPGGQRRGAGAGGRRSGGADAKTGE) are disordered. Positions 221-239 (EERRKRPGRPEGRRREGEG) are enriched in basic and acidic residues. Positions 240-255 (RPGGQRRGAGAGGRRS) are enriched in gly residues.

Belongs to the universal ribosomal protein uS3 family. In terms of assembly, part of the 30S ribosomal subunit. Forms a tight complex with proteins S10 and S14.

Its function is as follows. Binds the lower part of the 30S subunit head. Binds mRNA in the 70S ribosome, positioning it for translation. In Ralstonia nicotianae (strain ATCC BAA-1114 / GMI1000) (Ralstonia solanacearum), this protein is Small ribosomal subunit protein uS3.